A 254-amino-acid chain; its full sequence is 4-hydroxy-tetrahydrodipicolinate reductase (254 aa).

Residues 8 to 13 (GCSGKM), Asp-35, 86 to 88 (CST), and 110 to 113 (SANM) each bind NAD(+). His-143 functions as the Proton donor/acceptor in the catalytic mechanism. His-144 lines the (S)-2,3,4,5-tetrahydrodipicolinate pocket. The active-site Proton donor is Lys-147. Position 153-154 (153-154 (GT)) interacts with (S)-2,3,4,5-tetrahydrodipicolinate.

This sequence belongs to the DapB family.

It localises to the cytoplasm. The enzyme catalyses (S)-2,3,4,5-tetrahydrodipicolinate + NAD(+) + H2O = (2S,4S)-4-hydroxy-2,3,4,5-tetrahydrodipicolinate + NADH + H(+). It carries out the reaction (S)-2,3,4,5-tetrahydrodipicolinate + NADP(+) + H2O = (2S,4S)-4-hydroxy-2,3,4,5-tetrahydrodipicolinate + NADPH + H(+). The protein operates within amino-acid biosynthesis; L-lysine biosynthesis via DAP pathway; (S)-tetrahydrodipicolinate from L-aspartate: step 4/4. Functionally, catalyzes the conversion of 4-hydroxy-tetrahydrodipicolinate (HTPA) to tetrahydrodipicolinate. This chain is 4-hydroxy-tetrahydrodipicolinate reductase, found in Clostridium perfringens (strain SM101 / Type A).